The sequence spans 345 residues: Holliday junction branch migration complex subunit RuvB (345 aa).

The large ATPase domain (RuvB-L) stretch occupies residues T4–Y194. ATP is bound by residues L33, R34, G75, K78, T79, T80, E141–Y143, R184, Y194, and R231. T79 is a Mg(2+) binding site. The tract at residues N195–D265 is small ATPAse domain (RuvB-S). Residues P268 to A345 form a head domain (RuvB-H) region. Residues R323 and R328 each contribute to the DNA site.

It belongs to the RuvB family. As to quaternary structure, homohexamer. Forms an RuvA(8)-RuvB(12)-Holliday junction (HJ) complex. HJ DNA is sandwiched between 2 RuvA tetramers; dsDNA enters through RuvA and exits via RuvB. An RuvB hexamer assembles on each DNA strand where it exits the tetramer. Each RuvB hexamer is contacted by two RuvA subunits (via domain III) on 2 adjacent RuvB subunits; this complex drives branch migration. In the full resolvosome a probable DNA-RuvA(4)-RuvB(12)-RuvC(2) complex forms which resolves the HJ.

It localises to the cytoplasm. It catalyses the reaction ATP + H2O = ADP + phosphate + H(+). In terms of biological role, the RuvA-RuvB-RuvC complex processes Holliday junction (HJ) DNA during genetic recombination and DNA repair, while the RuvA-RuvB complex plays an important role in the rescue of blocked DNA replication forks via replication fork reversal (RFR). RuvA specifically binds to HJ cruciform DNA, conferring on it an open structure. The RuvB hexamer acts as an ATP-dependent pump, pulling dsDNA into and through the RuvAB complex. RuvB forms 2 homohexamers on either side of HJ DNA bound by 1 or 2 RuvA tetramers; 4 subunits per hexamer contact DNA at a time. Coordinated motions by a converter formed by DNA-disengaged RuvB subunits stimulates ATP hydrolysis and nucleotide exchange. Immobilization of the converter enables RuvB to convert the ATP-contained energy into a lever motion, pulling 2 nucleotides of DNA out of the RuvA tetramer per ATP hydrolyzed, thus driving DNA branch migration. The RuvB motors rotate together with the DNA substrate, which together with the progressing nucleotide cycle form the mechanistic basis for DNA recombination by continuous HJ branch migration. Branch migration allows RuvC to scan DNA until it finds its consensus sequence, where it cleaves and resolves cruciform DNA. This is Holliday junction branch migration complex subunit RuvB from Chromobacterium violaceum (strain ATCC 12472 / DSM 30191 / JCM 1249 / CCUG 213 / NBRC 12614 / NCIMB 9131 / NCTC 9757 / MK).